A 43-amino-acid chain; its full sequence is Phi-Lf prophage-derived putative minor coat protein (43 aa).

The chain is Phi-Lf prophage-derived putative minor coat protein (gVII-1) from Xanthomonas campestris pv. campestris (strain ATCC 33913 / DSM 3586 / NCPPB 528 / LMG 568 / P 25).